Here is a 382-residue protein sequence, read N- to C-terminus: UDP-4-amino-4-deoxy-L-arabinose--oxoglutarate aminotransferase (382 aa).

The residue at position 182 (Lys-182) is an N6-(pyridoxal phosphate)lysine.

It belongs to the DegT/DnrJ/EryC1 family. ArnB subfamily. Homodimer. Pyridoxal 5'-phosphate serves as cofactor.

It carries out the reaction UDP-4-amino-4-deoxy-beta-L-arabinose + 2-oxoglutarate = UDP-beta-L-threo-pentopyranos-4-ulose + L-glutamate. Its pathway is nucleotide-sugar biosynthesis; UDP-4-deoxy-4-formamido-beta-L-arabinose biosynthesis; UDP-4-deoxy-4-formamido-beta-L-arabinose from UDP-alpha-D-glucuronate: step 2/3. It participates in bacterial outer membrane biogenesis; lipopolysaccharide biosynthesis. Its function is as follows. Catalyzes the conversion of UDP-4-keto-arabinose (UDP-Ara4O) to UDP-4-amino-4-deoxy-L-arabinose (UDP-L-Ara4N). The modified arabinose is attached to lipid A and is required for resistance to polymyxin and cationic antimicrobial peptides. In Yersinia enterocolitica serotype O:8 / biotype 1B (strain NCTC 13174 / 8081), this protein is UDP-4-amino-4-deoxy-L-arabinose--oxoglutarate aminotransferase.